A 156-amino-acid chain; its full sequence is ATP synthase subunit b (156 aa).

The helical transmembrane segment at 7-27 threads the bilayer; it reads LIGQAIWFALFVFFCMKFVWP.

This sequence belongs to the ATPase B chain family. In terms of assembly, F-type ATPases have 2 components, F(1) - the catalytic core - and F(0) - the membrane proton channel. F(1) has five subunits: alpha(3), beta(3), gamma(1), delta(1), epsilon(1). F(0) has three main subunits: a(1), b(2) and c(10-14). The alpha and beta chains form an alternating ring which encloses part of the gamma chain. F(1) is attached to F(0) by a central stalk formed by the gamma and epsilon chains, while a peripheral stalk is formed by the delta and b chains.

Its subcellular location is the cell inner membrane. Its function is as follows. F(1)F(0) ATP synthase produces ATP from ADP in the presence of a proton or sodium gradient. F-type ATPases consist of two structural domains, F(1) containing the extramembraneous catalytic core and F(0) containing the membrane proton channel, linked together by a central stalk and a peripheral stalk. During catalysis, ATP synthesis in the catalytic domain of F(1) is coupled via a rotary mechanism of the central stalk subunits to proton translocation. Functionally, component of the F(0) channel, it forms part of the peripheral stalk, linking F(1) to F(0). This is ATP synthase subunit b from Alcanivorax borkumensis (strain ATCC 700651 / DSM 11573 / NCIMB 13689 / SK2).